A 243-amino-acid polypeptide reads, in one-letter code: Exosome complex component Rrp41 (243 aa).

The protein belongs to the RNase PH family. Rrp41 subfamily. In terms of assembly, component of the archaeal exosome complex. Forms a hexameric ring-like arrangement composed of 3 Rrp41-Rrp42 heterodimers. The hexameric ring associates with a trimer of Rrp4 and/or Csl4 subunits.

Its subcellular location is the cytoplasm. Catalytic component of the exosome, which is a complex involved in RNA degradation. Has 3'-&gt;5' exoribonuclease activity. Can also synthesize heteromeric RNA-tails. This chain is Exosome complex component Rrp41, found in Cenarchaeum symbiosum (strain A).